The chain runs to 476 residues: UDP-N-acetylmuramate--L-alanine ligase (476 aa).

Residue Gly-121–Thr-127 participates in ATP binding.

Belongs to the MurCDEF family.

It is found in the cytoplasm. It catalyses the reaction UDP-N-acetyl-alpha-D-muramate + L-alanine + ATP = UDP-N-acetyl-alpha-D-muramoyl-L-alanine + ADP + phosphate + H(+). It functions in the pathway cell wall biogenesis; peptidoglycan biosynthesis. Functionally, cell wall formation. This chain is UDP-N-acetylmuramate--L-alanine ligase, found in Clavibacter michiganensis subsp. michiganensis (strain NCPPB 382).